A 993-amino-acid polypeptide reads, in one-letter code: Vinculin (993 aa).

2 repeat units span residues 258-364 and 373-480. Positions 258–480 are 2 X repeats; the sequence is DSDNVTVMRK…LRNKLRELVD (223 aa). The interval 730 to 797 is disordered; sequence ITGAGGSRPP…PPPETDDEEE (68 aa). The span at 758–768 shows a compositional bias: basic and acidic residues; that stretch reads VHDRIYIREDI. The span at 769–790 shows a compositional bias: pro residues; the sequence is PTPPRPPPPVEISPPPRPPPPP.

The protein belongs to the vinculin/alpha-catenin family. In terms of assembly, exhibits self-association properties.

It is found in the cytoplasm. It localises to the cytoskeleton. The protein localises to the cell junction. The protein resides in the adherens junction. Its subcellular location is the cell membrane. Its function is as follows. Involved in cell adhesion. May be involved in the attachment of the actin-based microfilaments to the plasma membrane. This is Vinculin from Brugia malayi (Filarial nematode worm).